Consider the following 407-residue polypeptide: NADH-quinone oxidoreductase subunit D (407 aa).

The protein belongs to the complex I 49 kDa subunit family. As to quaternary structure, NDH-1 is composed of 14 different subunits. Subunits NuoB, C, D, E, F, and G constitute the peripheral sector of the complex.

Its subcellular location is the cell inner membrane. It catalyses the reaction a quinone + NADH + 5 H(+)(in) = a quinol + NAD(+) + 4 H(+)(out). Its function is as follows. NDH-1 shuttles electrons from NADH, via FMN and iron-sulfur (Fe-S) centers, to quinones in the respiratory chain. The immediate electron acceptor for the enzyme in this species is believed to be ubiquinone. Couples the redox reaction to proton translocation (for every two electrons transferred, four hydrogen ions are translocated across the cytoplasmic membrane), and thus conserves the redox energy in a proton gradient. This Roseobacter denitrificans (strain ATCC 33942 / OCh 114) (Erythrobacter sp. (strain OCh 114)) protein is NADH-quinone oxidoreductase subunit D.